Consider the following 87-residue polypeptide: Homeotic protein ultrabithorax (87 aa).

Residues 22-27 (FYPWMA) carry the Antp-type hexapeptide motif.

This sequence belongs to the Antp homeobox family. In terms of tissue distribution, in the embryo, expression is seen in the epidermis, somatic and visceral mesoderm, and the peripheral and central nervous system.

It localises to the nucleus. Functionally, sequence-specific transcription factor which is part of a developmental regulatory system that provides cells with specific positional identities on the anterior-posterior axis. Binds the consensus region 5'-TTAAT[GT][GA]-3'. This homeotic protein controls development of the cells in the posterior thoracic and first abdominal segments. It activates the synthesis of the decapentaplegic (DPP) growth factor. The polypeptide is Homeotic protein ultrabithorax (Ubx) (Drosophila virilis (Fruit fly)).